Here is a 426-residue protein sequence, read N- to C-terminus: Serine--tRNA ligase (426 aa).

231–233 (TAE) serves as a coordination point for L-serine. Residue 262–264 (RSE) coordinates ATP. Residue glutamate 285 coordinates L-serine. Residue 349 to 352 (EISS) coordinates ATP. Serine 385 is a binding site for L-serine.

The protein belongs to the class-II aminoacyl-tRNA synthetase family. Type-1 seryl-tRNA synthetase subfamily. As to quaternary structure, homodimer. The tRNA molecule binds across the dimer.

It is found in the cytoplasm. The enzyme catalyses tRNA(Ser) + L-serine + ATP = L-seryl-tRNA(Ser) + AMP + diphosphate + H(+). It catalyses the reaction tRNA(Sec) + L-serine + ATP = L-seryl-tRNA(Sec) + AMP + diphosphate + H(+). It functions in the pathway aminoacyl-tRNA biosynthesis; selenocysteinyl-tRNA(Sec) biosynthesis; L-seryl-tRNA(Sec) from L-serine and tRNA(Sec): step 1/1. Its function is as follows. Catalyzes the attachment of serine to tRNA(Ser). Is also able to aminoacylate tRNA(Sec) with serine, to form the misacylated tRNA L-seryl-tRNA(Sec), which will be further converted into selenocysteinyl-tRNA(Sec). The protein is Serine--tRNA ligase of Saccharophagus degradans (strain 2-40 / ATCC 43961 / DSM 17024).